Consider the following 339-residue polypeptide: Glucokinase (339 aa).

Position 16–21 (16–21) interacts with ATP; that stretch reads GDIGGT.

Belongs to the bacterial glucokinase family.

It localises to the cytoplasm. The enzyme catalyses D-glucose + ATP = D-glucose 6-phosphate + ADP + H(+). The sequence is that of Glucokinase from Rhizobium meliloti (strain 1021) (Ensifer meliloti).